The following is a 163-amino-acid chain: uncharacterized protein (163 aa).

The stretch at 136–161 forms a coiled coil; it reads QKYIENHQKEINEHVEKLRTLHKELR.

This is an uncharacterized protein from Acanthamoeba polyphaga (Amoeba).